A 308-amino-acid chain; its full sequence is 1D-myo-inositol 2-acetamido-2-deoxy-alpha-D-glucopyranoside deacetylase (308 aa).

Residues His-13, Asp-16, and His-147 each contribute to the Zn(2+) site.

It belongs to the MshB deacetylase family. It depends on Zn(2+) as a cofactor.

It catalyses the reaction 1D-myo-inositol 2-acetamido-2-deoxy-alpha-D-glucopyranoside + H2O = 1D-myo-inositol 2-amino-2-deoxy-alpha-D-glucopyranoside + acetate. In terms of biological role, catalyzes the deacetylation of 1D-myo-inositol 2-acetamido-2-deoxy-alpha-D-glucopyranoside (GlcNAc-Ins) in the mycothiol biosynthesis pathway. The polypeptide is 1D-myo-inositol 2-acetamido-2-deoxy-alpha-D-glucopyranoside deacetylase (Mycobacterium leprae (strain Br4923)).